A 161-amino-acid polypeptide reads, in one-letter code: Nucleotide-binding protein RSc2549 (161 aa).

It belongs to the YajQ family.

Functionally, nucleotide-binding protein. The sequence is that of Nucleotide-binding protein RSc2549 from Ralstonia nicotianae (strain ATCC BAA-1114 / GMI1000) (Ralstonia solanacearum).